Reading from the N-terminus, the 380-residue chain is Glutamate 5-kinase (380 aa).

Position 20 (lysine 20) interacts with ATP. The substrate site is built by serine 59, aspartate 146, and asparagine 158. Residue 220–226 (TGGMYSK) coordinates ATP. Positions 285 to 363 (SGTVTVDEGA…HEVAAILGDA (79 aa)) constitute a PUA domain.

The protein belongs to the glutamate 5-kinase family.

The protein resides in the cytoplasm. It carries out the reaction L-glutamate + ATP = L-glutamyl 5-phosphate + ADP. Its pathway is amino-acid biosynthesis; L-proline biosynthesis; L-glutamate 5-semialdehyde from L-glutamate: step 1/2. In terms of biological role, catalyzes the transfer of a phosphate group to glutamate to form L-glutamate 5-phosphate. This chain is Glutamate 5-kinase, found in Nitratidesulfovibrio vulgaris (strain ATCC 29579 / DSM 644 / CCUG 34227 / NCIMB 8303 / VKM B-1760 / Hildenborough) (Desulfovibrio vulgaris).